We begin with the raw amino-acid sequence, 621 residues long: 1-deoxy-D-xylulose-5-phosphate synthase (621 aa).

Thiamine diphosphate-binding positions include histidine 80 and 121–123 (GHS). A Mg(2+)-binding site is contributed by aspartate 152. Thiamine diphosphate contacts are provided by residues 153 to 154 (GA), asparagine 181, tyrosine 288, and glutamate 370. Asparagine 181 provides a ligand contact to Mg(2+).

This sequence belongs to the transketolase family. DXPS subfamily. As to quaternary structure, homodimer. It depends on Mg(2+) as a cofactor. Thiamine diphosphate serves as cofactor.

The enzyme catalyses D-glyceraldehyde 3-phosphate + pyruvate + H(+) = 1-deoxy-D-xylulose 5-phosphate + CO2. Its pathway is metabolic intermediate biosynthesis; 1-deoxy-D-xylulose 5-phosphate biosynthesis; 1-deoxy-D-xylulose 5-phosphate from D-glyceraldehyde 3-phosphate and pyruvate: step 1/1. Functionally, catalyzes the acyloin condensation reaction between C atoms 2 and 3 of pyruvate and glyceraldehyde 3-phosphate to yield 1-deoxy-D-xylulose-5-phosphate (DXP). The protein is 1-deoxy-D-xylulose-5-phosphate synthase of Aeromonas hydrophila subsp. hydrophila (strain ATCC 7966 / DSM 30187 / BCRC 13018 / CCUG 14551 / JCM 1027 / KCTC 2358 / NCIMB 9240 / NCTC 8049).